We begin with the raw amino-acid sequence, 435 residues long: 3-phosphoshikimate 1-carboxyvinyltransferase (435 aa).

3-phosphoshikimate-binding residues include lysine 21, serine 22, and arginine 26. Lysine 21 contributes to the phosphoenolpyruvate binding site. Glycine 98 and arginine 126 together coordinate phosphoenolpyruvate. 3-phosphoshikimate-binding residues include serine 169, serine 170, glutamine 171, serine 197, aspartate 312, and lysine 339. A phosphoenolpyruvate-binding site is contributed by glutamine 171. Catalysis depends on aspartate 312, which acts as the Proton acceptor. Phosphoenolpyruvate-binding residues include arginine 343, arginine 386, and lysine 412.

Belongs to the EPSP synthase family. As to quaternary structure, monomer.

Its subcellular location is the cytoplasm. It catalyses the reaction 3-phosphoshikimate + phosphoenolpyruvate = 5-O-(1-carboxyvinyl)-3-phosphoshikimate + phosphate. It participates in metabolic intermediate biosynthesis; chorismate biosynthesis; chorismate from D-erythrose 4-phosphate and phosphoenolpyruvate: step 6/7. Catalyzes the transfer of the enolpyruvyl moiety of phosphoenolpyruvate (PEP) to the 5-hydroxyl of shikimate-3-phosphate (S3P) to produce enolpyruvyl shikimate-3-phosphate and inorganic phosphate. The polypeptide is 3-phosphoshikimate 1-carboxyvinyltransferase (Clostridium beijerinckii (strain ATCC 51743 / NCIMB 8052) (Clostridium acetobutylicum)).